The primary structure comprises 765 residues: BRCA1-associated RING domain protein 1 (765 aa).

The required for BRCA1 binding stretch occupies residues 20–113 (MEPATDGLWA…KLQNLLHDNK (94 aa)). Residues 44-81 (CSRCANILKEPVCLGGCEHIFCSGCISDCVGSGCPVCY) form an RING-type zinc finger. A Glycyl lysine isopeptide (Lys-Gly) (interchain with G-Cter in SUMO2) cross-link involves residue K152. Disordered stretches follow at residues 183–229 (AVPK…EELK), 299–328 (KDLRSGGSNGNRKGCHRPTTSTSDSCGSNI), and 369–410 (NASD…MPAR). A compositionally biased stretch (basic residues) spans 195 to 204 (SAKKHPKKSV). Over residues 207 to 229 (INREENLRPETKDSRFDSKEELK) the composition is skewed to basic and acidic residues. Polar residues predominate over residues 316 to 328 (PTTSTSDSCGSNI). S378 is subject to Phosphoserine. The residue at position 381 (T381) is a Phosphothreonine. The span at 391 to 403 (HRQMMSSPSTVKL) shows a compositional bias: polar residues. Residue K411 forms a Glycyl lysine isopeptide (Lys-Gly) (interchain with G-Cter in SUMO2) linkage. ANK repeat units lie at residues 415-447 (RGETLLHIASIKGDIPSVEYLLQNGNDPNVKDH), 448-480 (AGWTPLHEACSHGHLKVVELLLQHNALVNTPGY), and 481-513 (QNDSPLHDAVKSGHIDIVKVLLSHGASRNAVNI). The stretch at 514 to 534 (FGVRPVDYTDNENIRSLLLLP) is one ANK 4; degenerate repeat. Positions 542 to 546 (TSQCS) are flexible linker. BRCT domains are found at residues 549 to 641 (NTGQ…KYEV) and 655 to 765 (LLPK…PLDS).

Homo- and heterodimer. Heterodimer (RING-type zinc finger) with BRCA1. Heterodimer (via ANK repeats and BRCT domains) with CSTF1/CSTF-50. Component of the BRCA1-A complex, at least composed of the BRCA1, BARD1, UIMC1/RAP80, ABRAXAS1, BRCC3/BRCC36, BABAM2 and BABAM1/NBA1. Interacts with UBXN1. Post-translationally, processed during apoptosis. The homodimer is more susceptible to proteolytic cleavage than the BARD1/BRCA1 heterodimer.

It localises to the nucleus. The protein resides in the cytoplasm. It carries out the reaction S-ubiquitinyl-[E2 ubiquitin-conjugating enzyme]-L-cysteine + [acceptor protein]-L-lysine = [E2 ubiquitin-conjugating enzyme]-L-cysteine + N(6)-ubiquitinyl-[acceptor protein]-L-lysine.. It functions in the pathway protein modification; protein ubiquitination. In terms of biological role, E3 ubiquitin-protein ligase. The BRCA1-BARD1 heterodimer specifically mediates the formation of 'Lys-6'-linked polyubiquitin chains and coordinates a diverse range of cellular pathways such as DNA damage repair, ubiquitination and transcriptional regulation to maintain genomic stability. Plays a central role in the control of the cell cycle in response to DNA damage. Acts by mediating ubiquitin E3 ligase activity that is required for its tumor suppressor function. Also forms a heterodimer with CSTF1/CSTF-50 to modulate mRNA processing and RNAP II stability by inhibiting pre-mRNA 3' cleavage. This Mus musculus (Mouse) protein is BRCA1-associated RING domain protein 1 (Bard1).